Reading from the N-terminus, the 145-residue chain is Galectin-5 (145 aa).

Ser2 is modified (N-acetylserine). The Galectin domain occupies 17 to 145 (FFTSIPNGLY…GDIQLTHVET (129 aa)). Position 77–83 (77–83 (WGPEERS)) interacts with a beta-D-galactoside.

Monomer. As to expression, erythrocytes.

May function in erythrocyte differentiation. The sequence is that of Galectin-5 (Lgals5) from Rattus norvegicus (Rat).